Reading from the N-terminus, the 76-residue chain is UPF0346 protein LBA0976 (76 aa).

The protein belongs to the UPF0346 family.

The protein is UPF0346 protein LBA0976 of Lactobacillus acidophilus (strain ATCC 700396 / NCK56 / N2 / NCFM).